A 382-amino-acid polypeptide reads, in one-letter code: Putative acetyl-CoA C-acetyltransferase VraB (382 aa).

Residue C86 is the Acyl-thioester intermediate of the active site. Catalysis depends on H338, which acts as the Proton acceptor.

It belongs to the thiolase-like superfamily. Thiolase family.

This chain is Putative acetyl-CoA C-acetyltransferase VraB (vraB), found in Staphylococcus epidermidis (strain ATCC 35984 / DSM 28319 / BCRC 17069 / CCUG 31568 / BM 3577 / RP62A).